We begin with the raw amino-acid sequence, 439 residues long: Adenylosuccinate synthetase (439 aa).

Residues 13-19 (GDEGKGK) and 41-43 (GHT) contribute to the GTP site. Asp-14 (proton acceptor) is an active-site residue. The Mg(2+) site is built by Asp-14 and Gly-41. IMP is bound by residues 14 to 17 (DEGK), 39 to 42 (NAGH), Thr-130, Arg-144, Gln-226, Thr-241, and Arg-313. Residue His-42 is the Proton donor of the active site. 309-315 (ASTGRQR) serves as a coordination point for substrate. GTP contacts are provided by residues Arg-315, 341–343 (KLD), and 422–424 (STG).

This sequence belongs to the adenylosuccinate synthetase family. Homodimer. The cofactor is Mg(2+).

Its subcellular location is the cytoplasm. The enzyme catalyses IMP + L-aspartate + GTP = N(6)-(1,2-dicarboxyethyl)-AMP + GDP + phosphate + 2 H(+). It functions in the pathway purine metabolism; AMP biosynthesis via de novo pathway; AMP from IMP: step 1/2. In terms of biological role, plays an important role in the de novo pathway of purine nucleotide biosynthesis. Catalyzes the first committed step in the biosynthesis of AMP from IMP. The chain is Adenylosuccinate synthetase from Acinetobacter baylyi (strain ATCC 33305 / BD413 / ADP1).